The sequence spans 383 residues: Neuropeptide Y receptor type 1 (383 aa).

Residues 1 to 44 (MNSTLSSQVENHSIYYNFSEKNSQFLAFENDDCHLPLAMIFTLA) are Extracellular-facing. 3 N-linked (GlcNAc...) asparagine glycosylation sites follow: asparagine 2, asparagine 11, and asparagine 17. Residues 45-65 (LAYGAVIILGVSGNLALIIII) form a helical membrane-spanning segment. The Cytoplasmic segment spans residues 66 to 76 (LKQKEMRNVTN). Residues 77–97 (ILIVNLSFSDLLVAIMCLPFT) form a helical membrane-spanning segment. Residues 98 to 116 (FVYTLMDHWVFGEVMCKLN) are Extracellular-facing. Cysteine 113 and cysteine 198 are joined by a disulfide. Residues 117–137 (PFVQCVSITVSIFSLVLIAVE) form a helical membrane-spanning segment. Residues 138–154 (RHQLIINPRGWRPSNRH) lie on the Cytoplasmic side of the membrane. A helical membrane pass occupies residues 155 to 175 (AYVGIAVIWVLAVASSLPFLI). Residues 176-211 (YQVLTDEPFQNVTLDAFKDKYVCFDKFLSDSHRLSY) lie on the Extracellular side of the membrane. Residues 212–232 (TTLLLVLQYFGPLCFIFICYF) form a helical membrane-spanning segment. Topologically, residues 233-260 (KIYIRLKRRNNMMDKMRDNKYRSSETKR) are cytoplasmic. A helical transmembrane segment spans residues 261-281 (INVMLLSIVVAFAVCWLPLTI). The Extracellular segment spans residues 282–299 (FNTVFDWNHQIIATCNHN). A helical transmembrane segment spans residues 300 to 320 (LLFLLCHLTAMISTCINPIFY). The Cytoplasmic segment spans residues 321-383 (GFLNKNFQRD…KIHSDDNEKI (63 aa)). Cysteine 338 carries the S-palmitoyl cysteine lipid modification. Serine 368 is subject to Phosphoserine.

Belongs to the G-protein coupled receptor 1 family.

It localises to the cell membrane. Receptor for neuropeptide Y and peptide YY. This chain is Neuropeptide Y receptor type 1 (NPY1R), found in Sus scrofa (Pig).